Consider the following 305-residue polypeptide: Methionyl-tRNA formyltransferase (305 aa).

110–113 (SLLP) is a binding site for (6S)-5,6,7,8-tetrahydrofolate.

This sequence belongs to the Fmt family.

It catalyses the reaction L-methionyl-tRNA(fMet) + (6R)-10-formyltetrahydrofolate = N-formyl-L-methionyl-tRNA(fMet) + (6S)-5,6,7,8-tetrahydrofolate + H(+). Its function is as follows. Attaches a formyl group to the free amino group of methionyl-tRNA(fMet). The formyl group appears to play a dual role in the initiator identity of N-formylmethionyl-tRNA by promoting its recognition by IF2 and preventing the misappropriation of this tRNA by the elongation apparatus. This Ureaplasma urealyticum serovar 10 (strain ATCC 33699 / Western) protein is Methionyl-tRNA formyltransferase.